Reading from the N-terminus, the 361-residue chain is Phospho-N-acetylmuramoyl-pentapeptide-transferase (361 aa).

10 helical membrane passes run 25-45 (RAVMAALTALTISLLLGPWVI), 73-93 (TMGGSLILLAITLTTLLWADL), 97-117 (YVWLLLAVMLGTGALGFYDDW), 132-152 (FKMAWQSAIAIGAGVFLIATA), 167-187 (TVAYPLGAVGFCVLTYFVIVG), 200-220 (GLAALPTVLVSAGLAIFAYVA), 240-260 (VVVFCAAMCGACLGFLWFNAY), 264-284 (VFMGDVGALALGAALGTVAVI), 289-309 (IVLFLMGGLFVMEALSVMIQV), and 338-358 (QVVVRFWIVTMMLVLIGLSTL).

Belongs to the glycosyltransferase 4 family. MraY subfamily. Mg(2+) serves as cofactor.

The protein resides in the cell inner membrane. The enzyme catalyses UDP-N-acetyl-alpha-D-muramoyl-L-alanyl-gamma-D-glutamyl-meso-2,6-diaminopimeloyl-D-alanyl-D-alanine + di-trans,octa-cis-undecaprenyl phosphate = di-trans,octa-cis-undecaprenyl diphospho-N-acetyl-alpha-D-muramoyl-L-alanyl-D-glutamyl-meso-2,6-diaminopimeloyl-D-alanyl-D-alanine + UMP. Its pathway is cell wall biogenesis; peptidoglycan biosynthesis. Its function is as follows. Catalyzes the initial step of the lipid cycle reactions in the biosynthesis of the cell wall peptidoglycan: transfers peptidoglycan precursor phospho-MurNAc-pentapeptide from UDP-MurNAc-pentapeptide onto the lipid carrier undecaprenyl phosphate, yielding undecaprenyl-pyrophosphoryl-MurNAc-pentapeptide, known as lipid I. This is Phospho-N-acetylmuramoyl-pentapeptide-transferase from Chromobacterium violaceum (strain ATCC 12472 / DSM 30191 / JCM 1249 / CCUG 213 / NBRC 12614 / NCIMB 9131 / NCTC 9757 / MK).